The primary structure comprises 994 residues: Zinc finger protein basonuclin-1 (994 aa).

The tract at residues 1-29 (MRRRPPSRGGRGAARARETRRQPRHRSGR) is disordered. A hydrophobic region spans residues 240–249 (MTFMLPFQFF). C2H2-type zinc fingers lie at residues 357–380 (VFCTACEKTFYDKGTLKIHYNAVH) and 385–414 (HKCTIEGCNMVFSSLRSRNRHSANPNPRLH). 2 disordered regions span residues 402–425 (RNRHSANPNPRLHMPMNRNNRDKD) and 444–472 (TVTSPDCRPPPSYPGSGEDSKGQPAFPNI). Positions 533–539 (PKKKSRK) match the Nuclear localization signal motif. 2 positions are modified to phosphoserine: serine 537 and serine 541. Residues 555-639 (NEKRHNLSSD…HNSERETEQT (85 aa)) are disordered. Acidic residues predominate over residues 563-578 (SDEDMPLQVVSEDEQE). A compositionally biased stretch (basic and acidic residues) spans 603–614 (PEGERPCHRESV). The span at 615 to 630 (IESSGAISQTPEQATH) shows a compositional bias: polar residues. C2H2-type zinc fingers lie at residues 720–743 (FQCDICKKTFKNACSVKIHHKNMH) and 748–775 (HTCTVEGCNATFPSRRSRDRHSSNLNLH). The segment covering 859 to 877 (STTSSMKSESSSHSSWDSD) has biased composition (low complexity). Residues 859 to 881 (STTSSMKSESSSHSSWDSDGVSE) form a disordered region. 2 consecutive C2H2-type zinc fingers follow at residues 928–951 (ITCHLCQKTYSNKGTFRAHYKTVH) and 956–983 (HKCKVPGCNTMFSSVRSRNRHSQNPNLH). The interval 970–994 (VRSRNRHSQNPNLHKSLASSPSHLQ) is disordered.

As to quaternary structure, interacts with HSF2BP (via C-terminus). Phosphorylation on Ser-537 and Ser-541 leads to cytoplasmic localization. In epidermis, primarily detected in cells of the basal or immediately suprabasal layers (at protein level). In hair follicles, mainly expressed in the outer root sheath (at protein level). Expressed in epidermis, testis and foreskin, and to a lower extent in thymus, spleen, mammary glands, placenta, brain and heart. Expressed in the ovary, notably in oocytes.

It localises to the nucleus. The protein resides in the cytoplasm. Its subcellular location is the nucleoplasm. Its function is as follows. Transcriptional activator. It is likely involved in the regulation of keratinocytes terminal differentiation in squamous epithelia and hair follicles. Required for the maintenance of spermatogenesis. It is involved in the positive regulation of oocyte maturation, probably acting through the control of BMP15 levels and regulation of AKT signaling cascade. May also play a role in the early development of embryos. In Homo sapiens (Human), this protein is Zinc finger protein basonuclin-1 (BNC1).